We begin with the raw amino-acid sequence, 252 residues long: Triosephosphate isomerase (252 aa).

10–12 contributes to the substrate binding site; sequence NWK. His96 (electrophile) is an active-site residue. The active-site Proton acceptor is the Glu168. Substrate is bound by residues Gly174, Ser214, and 235–236; that span reads GG.

Belongs to the triosephosphate isomerase family. In terms of assembly, homodimer.

It is found in the cytoplasm. The catalysed reaction is D-glyceraldehyde 3-phosphate = dihydroxyacetone phosphate. The protein operates within carbohydrate biosynthesis; gluconeogenesis. It participates in carbohydrate degradation; glycolysis; D-glyceraldehyde 3-phosphate from glycerone phosphate: step 1/1. Its function is as follows. Involved in the gluconeogenesis. Catalyzes stereospecifically the conversion of dihydroxyacetone phosphate (DHAP) to D-glyceraldehyde-3-phosphate (G3P). This Streptococcus pyogenes serotype M18 (strain MGAS8232) protein is Triosephosphate isomerase.